Here is a 441-residue protein sequence, read N- to C-terminus: GTPase Der (441 aa).

EngA-type G domains lie at 4–169 (PVVA…PDSS) and 178–353 (PRVA…ENNS). GTP contacts are provided by residues 10–17 (GRPNVGKS), 57–61 (DTGGI), 120–123 (NKVD), 184–191 (GKPNVGKS), 231–235 (DTAGL), and 296–299 (NKWD). Residues 354–438 (MRVATGVLNE…ALKFITRERK (85 aa)) enclose the KH-like domain.

It belongs to the TRAFAC class TrmE-Era-EngA-EngB-Septin-like GTPase superfamily. EngA (Der) GTPase family. Associates with the 50S ribosomal subunit.

Functionally, GTPase that plays an essential role in the late steps of ribosome biogenesis. The sequence is that of GTPase Der from Agathobacter rectalis (strain ATCC 33656 / DSM 3377 / JCM 17463 / KCTC 5835 / VPI 0990) (Eubacterium rectale).